A 340-amino-acid polypeptide reads, in one-letter code: MRVYYDRDCDVNLIKDKKIAMLGYGSQGHAHALNLRDSGAKNLVVALREGSASAKKAEAEGLKVMGIAEAAAWADLIMFTMPDELQAETYRKYVHDNLREGAAIAFAHGLNVHFGLIEPKPGVDVIMMAPKGPGHTVRGEYTKGGGVPCLVAVHQDATGKAMDIGLSYCSAIGGGRSGIIETNFRQECETDLFGEQAVLCGGLVELIRMGFETLVEAGYEPEMAYFECLHEVKLIVDLIYEGGIANMNYSISNTAEYGEYVSGPRVLPYEETKARMKAVLTDIQTGKFVRDFMQENAVGQPFFKATRRINDEHQIEKVGEKLRGMMPWISKGKMVDKERN.

Residues 1–182 form the KARI N-terminal Rossmann domain; the sequence is MRVYYDRDCD…GGGRSGIIET (182 aa). Residues 24-27, Arg-48, Ser-51, Ser-53, and 83-86 each bind NADP(+); these read YGSQ and DELQ. His-108 is an active-site residue. Gly-134 serves as a coordination point for NADP(+). A KARI C-terminal knotted domain is found at 183-329; the sequence is NFRQECETDL…EKLRGMMPWI (147 aa). Mg(2+)-binding residues include Asp-191, Glu-195, Glu-227, and Glu-231. Ser-252 contributes to the substrate binding site.

Belongs to the ketol-acid reductoisomerase family. Mg(2+) is required as a cofactor.

It carries out the reaction (2R)-2,3-dihydroxy-3-methylbutanoate + NADP(+) = (2S)-2-acetolactate + NADPH + H(+). The enzyme catalyses (2R,3R)-2,3-dihydroxy-3-methylpentanoate + NADP(+) = (S)-2-ethyl-2-hydroxy-3-oxobutanoate + NADPH + H(+). The protein operates within amino-acid biosynthesis; L-isoleucine biosynthesis; L-isoleucine from 2-oxobutanoate: step 2/4. Its pathway is amino-acid biosynthesis; L-valine biosynthesis; L-valine from pyruvate: step 2/4. Involved in the biosynthesis of branched-chain amino acids (BCAA). Catalyzes an alkyl-migration followed by a ketol-acid reduction of (S)-2-acetolactate (S2AL) to yield (R)-2,3-dihydroxy-isovalerate. In the isomerase reaction, S2AL is rearranged via a Mg-dependent methyl migration to produce 3-hydroxy-3-methyl-2-ketobutyrate (HMKB). In the reductase reaction, this 2-ketoacid undergoes a metal-dependent reduction by NADPH to yield (R)-2,3-dihydroxy-isovalerate. This is Ketol-acid reductoisomerase (NADP(+)) from Paracoccus denitrificans (strain Pd 1222).